The chain runs to 109 residues: Putative double-stranded DNA mimic protein YciU (109 aa).

This sequence belongs to the putative dsDNA mimic protein family.

May act as a double-stranded DNA (dsDNA) mimic. Probably regulates the activity of a dsDNA-binding protein. This is Putative double-stranded DNA mimic protein YciU from Salmonella choleraesuis (strain SC-B67).